A 208-amino-acid polypeptide reads, in one-letter code: Uracil phosphoribosyltransferase (208 aa).

Residues R78, R103, and 130-138 contribute to the 5-phospho-alpha-D-ribose 1-diphosphate site; that span reads DPMLATGGT. Residues I193 and 198-200 each bind uracil; that span reads GDA. A 5-phospho-alpha-D-ribose 1-diphosphate-binding site is contributed by D199.

Belongs to the UPRTase family. Requires Mg(2+) as cofactor.

The enzyme catalyses UMP + diphosphate = 5-phospho-alpha-D-ribose 1-diphosphate + uracil. Its pathway is pyrimidine metabolism; UMP biosynthesis via salvage pathway; UMP from uracil: step 1/1. Its activity is regulated as follows. Allosterically activated by GTP. Its function is as follows. Catalyzes the conversion of uracil and 5-phospho-alpha-D-ribose 1-diphosphate (PRPP) to UMP and diphosphate. This Nitratidesulfovibrio vulgaris (strain DSM 19637 / Miyazaki F) (Desulfovibrio vulgaris) protein is Uracil phosphoribosyltransferase.